A 523-amino-acid polypeptide reads, in one-letter code: Pentatricopeptide repeat-containing protein At1g64580 (523 aa).

PPR repeat units follow at residues 43-77, 78-112, 113-147, 148-182, 183-217, 218-252, 253-287, 288-322, 323-357, 358-392, 393-427, 428-462, and 463-497; these read HHHHYRERLRNELHCIKFDDAFSLFCEMLQSRPIP, SIVDFTRVLTVIAKMNKFDIVIYLYHKMENLGISH, DLYSFTILIHCFCRCSRLSLALALLGKMMKLGFRP, SIVTLGSLLNGFCQGNRFQEAVSLVDSMDGFGFVP, NVVIYNTVINGLCKNRDLNNALEVFYCMEKKGIRA, DAVTYNTLISGLSNSGRWTDAARLLRDMVKRKIDP, NVIFFTALIDTFVKEGNLLEARNLYKEMIRRSVVP, NVFTYNSLINGFCIHGCLGDAKYMFDLMVSKGCFP, DVVTYNTLITGFCKSKRVEDGMKLFCEMTYQGLVG, DAFTYNTLIHGYCQAGKLNVAQKVFNRMVDCGVSP, DIVTYNILLDCLCNNGKIEKALVMVEDLQKSEMDV, DIITYNIIIQGLCRTDKLKEAWCLFRSLTRKGVKP, and DAIAYITMISGLCRKGLQREADKLCRRMKEDGFMP.

It belongs to the PPR family. P subfamily.

The polypeptide is Pentatricopeptide repeat-containing protein At1g64580 (Arabidopsis thaliana (Mouse-ear cress)).